The following is a 316-amino-acid chain: Ribosomal protein L11 methyltransferase (316 aa).

Positions 163, 184, 206, and 249 each coordinate S-adenosyl-L-methionine.

It belongs to the methyltransferase superfamily. PrmA family.

The protein resides in the cytoplasm. It carries out the reaction L-lysyl-[protein] + 3 S-adenosyl-L-methionine = N(6),N(6),N(6)-trimethyl-L-lysyl-[protein] + 3 S-adenosyl-L-homocysteine + 3 H(+). Methylates ribosomal protein L11. The sequence is that of Ribosomal protein L11 methyltransferase from Pediococcus pentosaceus (strain ATCC 25745 / CCUG 21536 / LMG 10740 / 183-1w).